The sequence spans 311 residues: MIELRDLSYSYPDGTPALRGINMKVERGERVAVIGPNGAGKSTLFLHLNGILKPAAGEVIIDGERVDYSKDELIKIRQKVGIVFQNPDDQLFSPTVREDVAFGPMNLGLPEDEVEERVAESLEKVGMSGYENRAPHHLSGGEKKRVAIAGILAMKPEIMVLDEPTTGLDPETADGIIRILLELSREGITVMISSHDVEIISQFAERVFVLNSGELIAEGTPLEIFRDAELIRRASLRLPRTADLLNRLRMAGFEVDVKLTVEETYHELLHLLGGDAYHRLLHFLGEEKQHRLIHLLGEKKYHELLHALKEQ.

The region spanning 2 to 237 is the ABC transporter domain; sequence IELRDLSYSY…AELIRRASLR (236 aa). 35 to 42 is an ATP binding site; the sequence is GPNGAGKS.

Belongs to the ABC transporter superfamily. Energy-coupling factor EcfA family. As to quaternary structure, forms a stable energy-coupling factor (ECF) transporter complex composed of 2 membrane-embedded substrate-binding proteins (S component), 2 ATP-binding proteins (A component) and 2 transmembrane proteins (T component).

It localises to the cell membrane. Functionally, ATP-binding (A) component of a common energy-coupling factor (ECF) ABC-transporter complex. Unlike classic ABC transporters this ECF transporter provides the energy necessary to transport a number of different substrates. The sequence is that of Energy-coupling factor transporter ATP-binding protein EcfA from Methanothermobacter thermautotrophicus (strain ATCC 29096 / DSM 1053 / JCM 10044 / NBRC 100330 / Delta H) (Methanobacterium thermoautotrophicum).